Consider the following 401-residue polypeptide: 3-oxoadipyl-CoA/3-oxo-5,6-dehydrosuberyl-CoA thiolase (401 aa).

The active-site Acyl-thioester intermediate is Cys-90. Active-site proton acceptor residues include His-357 and Cys-387.

Belongs to the thiolase-like superfamily. Thiolase family.

It carries out the reaction succinyl-CoA + acetyl-CoA = 3-oxoadipyl-CoA + CoA. The catalysed reaction is 2,3-didehydroadipoyl-CoA + acetyl-CoA = 3-oxo-5,6-didehydrosuberyl-CoA + CoA. It functions in the pathway aromatic compound metabolism; phenylacetate degradation. Functionally, catalyzes the thiolytic cleavage of the beta-keto C8 intermediate 3-oxo-5,6-dehydrosuberyl-CoA with CoA to yield the C6 intermediate 2,3-dehydroadipyl-CoA and acetyl-CoA. Besides it catalyzes also the last step of the pathway, in which 3-oxoadipyl-CoA similarly is cleaved to acetyl-CoA and succinyl-CoA. The chain is 3-oxoadipyl-CoA/3-oxo-5,6-dehydrosuberyl-CoA thiolase (paaJ) from Escherichia coli (strain K12).